The sequence spans 154 residues: Small ribosomal subunit protein bS6 (154 aa).

A disordered region spans residues 94–154 (VKQEGPLPTP…SSQGKESQKS (61 aa)). Residues 103-112 (PRSSNKGYNQ) are compositionally biased toward polar residues. Over residues 113-139 (SEKKDIESIDSTNKSEFKEEANDKKTA) the composition is skewed to basic and acidic residues. A compositionally biased stretch (polar residues) spans 140 to 154 (TSESTSSQGKESQKS).

It belongs to the bacterial ribosomal protein bS6 family.

In terms of biological role, binds together with bS18 to 16S ribosomal RNA. This is Small ribosomal subunit protein bS6 from Prochlorococcus marinus subsp. pastoris (strain CCMP1986 / NIES-2087 / MED4).